The primary structure comprises 64 residues: Alpha-conotoxin-like Lp1.7 (64 aa).

The N-terminal stretch at 1–21 (MGMRMMFTMFLLVVLTTTVVS) is a signal peptide. Residues 22–41 (FNSDRESNHENRRTSNQITR) constitute a propeptide that is removed on maturation. Cystine bridges form between C47-C53 and C48-C61. Residues 49–51 (DDP) are lacks the Ser-Xaa-Pro motif that is crucial for potent interaction with nAChR.

Belongs to the conotoxin A superfamily. In terms of tissue distribution, expressed by the venom duct.

Its subcellular location is the secreted. Alpha-conotoxins act on postsynaptic membranes, they bind to the nicotinic acetylcholine receptors (nAChR) and thus inhibit them. Has possibly a distinct nAChR binding mode from other alpha-conotoxins, due to a different three residue motif (lacks the Ser-Xaa-Pro motif). The polypeptide is Alpha-conotoxin-like Lp1.7 (Conus leopardus (Leopard cone)).